We begin with the raw amino-acid sequence, 219 residues long: Antigen 5 like allergen Cul n 1 (219 aa).

The signal sequence occupies residues 1-19 (MIKKLSIVILFSCISFVLS). 3 disulfide bridges follow: C23-C45, C28-C124, and C55-C117. The SCP domain occupies 73 to 211 (LKVHNRLRNK…RHSGNKYFFW (139 aa)).

This sequence belongs to the CRISP family. As to expression, expressed in salivary glands.

It localises to the secreted. The chain is Antigen 5 like allergen Cul n 1 from Culicoides nubeculosus (Biting midge).